We begin with the raw amino-acid sequence, 229 residues long: UPF0488 protein C8orf33 homolog (229 aa).

At alanine 2 the chain carries N-acetylalanine. Arginine 27 carries the post-translational modification Omega-N-methylarginine. The disordered stretch occupies residues 55-101; sequence SRAHPLGDEGGTASKKQNKKKKTRNRASVANGGEKASEKLAPEEVPL. The span at 70–79 shows a compositional bias: basic residues; sequence KQNKKKKTRN. Serine 82 bears the Phosphoserine mark.

This sequence belongs to the UPF0488 family.

This is UPF0488 protein C8orf33 homolog from Pongo abelii (Sumatran orangutan).